We begin with the raw amino-acid sequence, 640 residues long: Dextranase (640 aa).

The first 32 residues, 1–32 (MPGTGLGRLAKRMTAAAAVFFISTSAVLPAQA), serve as a signal peptide directing secretion. Residues 33–49 (ATAPAAAPPGVPAALKA) constitute a propeptide that is removed on maturation. The interval 248-269 (EQKERLVPTEESGSIHYPEPGE) is disordered.

Belongs to the glycosyl hydrolase 49 family.

It is found in the secreted. It catalyses the reaction Endohydrolysis of (1-&gt;6)-alpha-D-glucosidic linkages in dextran.. In terms of biological role, efficiently decomposes water-insoluble glucan as well as dextran. This chain is Dextranase, found in Arthrobacter sp. (strain CB-8).